Here is a 432-residue protein sequence, read N- to C-terminus: Keratin, type I cytoskeletal 18-B (432 aa).

Positions 1-21 are enriched in low complexity; the sequence is MSYSRSMYSSSSVVGGSPYRS. The disordered stretch occupies residues 1–44; sequence MSYSRSMYSSSSVVGGSPYRSLSSAPRFAPGSSAASVHAGPGGS. The interval 2 to 82 is head; the sequence is SYSRSMYSSS…NVSLMGGAQN (81 aa). Positions 83 to 118 are coil 1A; it reads EKETMQDLNDRLASYLERVRSLETANKELEVQIRQH. Residues 83 to 393 form the IF rod domain; the sequence is EKETMQDLND…RLLEGDSFDL (311 aa). The tract at residues 119–134 is linker 1; the sequence is TEKKGPAKDWSPYYKA. The tract at residues 135-226 is coil 1B; the sequence is IEDLKKQVFD…KNHQDDVNEL (92 aa). Positions 227-250 are linker 12; it reads QAQIARSAVTVEVDAPKSQDLGKI. Residues 251 to 388 form a coil 2 region; it reads MAELRAQYDG…IHTYRRLLEG (138 aa). The tract at residues 389-432 is tail; that stretch reads DSFDLQDAVPTVTTQTVKKVITTTQRIVDGKVVAESNDTEVLKA.

The protein belongs to the intermediate filament family. Heterotetramer of two type I and two type II keratins. Keratin-18 associates with keratin-8. Post-translationally, phosphorylated. In terms of processing, proteolytically cleaved by caspases during epithelial cell apoptosis.

In terms of biological role, when phosphorylated, plays a role in filament reorganization. The chain is Keratin, type I cytoskeletal 18-B (krt18-b) from Xenopus laevis (African clawed frog).